A 61-amino-acid chain; its full sequence is Large ribosomal subunit protein uL30 (61 aa).

It belongs to the universal ribosomal protein uL30 family. In terms of assembly, part of the 50S ribosomal subunit.

This Caulobacter vibrioides (strain ATCC 19089 / CIP 103742 / CB 15) (Caulobacter crescentus) protein is Large ribosomal subunit protein uL30.